Consider the following 170-residue polypeptide: 6,7-dimethyl-8-ribityllumazine synthase (170 aa).

Residues W25, 57-59 (AVE), and 79-81 (AVI) each bind 5-amino-6-(D-ribitylamino)uracil. 84–85 (DT) is a binding site for (2S)-2-hydroxy-3-oxobutyl phosphate. The Proton donor role is filled by H87. N112 contacts 5-amino-6-(D-ribitylamino)uracil. R126 contacts (2S)-2-hydroxy-3-oxobutyl phosphate.

The protein belongs to the DMRL synthase family.

It catalyses the reaction (2S)-2-hydroxy-3-oxobutyl phosphate + 5-amino-6-(D-ribitylamino)uracil = 6,7-dimethyl-8-(1-D-ribityl)lumazine + phosphate + 2 H2O + H(+). The protein operates within cofactor biosynthesis; riboflavin biosynthesis; riboflavin from 2-hydroxy-3-oxobutyl phosphate and 5-amino-6-(D-ribitylamino)uracil: step 1/2. In terms of biological role, catalyzes the formation of 6,7-dimethyl-8-ribityllumazine by condensation of 5-amino-6-(D-ribitylamino)uracil with 3,4-dihydroxy-2-butanone 4-phosphate. This is the penultimate step in the biosynthesis of riboflavin. This is 6,7-dimethyl-8-ribityllumazine synthase from Thermobifida fusca (strain YX).